Here is a 410-residue protein sequence, read N- to C-terminus: MAGSAGSAGGSARKRLMKEEDMTKVEFETSEEVDVTPTFDTMGLREDLLRGIYAYGFEKPSAIQQRAIKQIIKGRDVIAQSQSGTGKTATFSISVLQCLDIQVRETQALILAPTRELAVQIQKGLLALGDYMNVQCHACIGGTNVGEDIRKLDYGQHVVAGTPGRVFDMIRRRSLRTRAIKMLVLDEADEMLNKGFKEQIYDVYRYLPPATQVVLISATLPHEILEMTNKFMTDPIRILVKRDELTLEGIKQFFVAVEREEWKFDTLCDLYDTLTITQAVIFCNTKRKVDWLTEKMREANFTVSSMHGDMPQKERESIMKEFRSGASRVLISTDVWARGLDVPQVSLIINYDLPNNRELYIHRIGRSGRYGRKGVAINFVKNDDIRILRDIEQYYSTQIDEMPMNVADLI.

Residues 1-20 (MAGSAGSAGGSARKRLMKEE) are disordered. A Q motif motif is present at residues 37 to 65 (PTFDTMGLREDLLRGIYAYGFEKPSAIQQ). ATP is bound by residues Lys-59, Gln-64, 81 to 88 (SQSGTGKT), and 84 to 89 (GTGKTA). Positions 68–238 (IKQIIKGRDV…NKFMTDPIRI (171 aa)) constitute a Helicase ATP-binding domain. Positions 186 to 189 (DEAD) match the DEAD box motif. A Helicase C-terminal domain is found at 249–410 (GIKQFFVAVE…EMPMNVADLI (162 aa)). ATP-binding positions include Asp-341 and 366 to 370 (RSGRY).

Belongs to the DEAD box helicase family. eIF4A subfamily. In terms of assembly, identified in the spliceosome C complex. Part of the mRNA splicing-dependent exon junction complex (EJC) complex; the core complex contains casc3, eif4a3, magoh and rbm8a.

The protein resides in the nucleus. It localises to the nucleus speckle. It is found in the cytoplasm. It carries out the reaction ATP + H2O = ADP + phosphate + H(+). Its function is as follows. ATP-dependent RNA helicase. Involved in pre-mRNA splicing as component of the spliceosome. Core component of the splicing-dependent multiprotein exon junction complex (EJC) deposited at splice junctions on mRNAs. The EJC is a dynamic structure consisting of core proteins and several peripheral nuclear and cytoplasmic associated factors that join the complex only transiently either during EJC assembly or during subsequent mRNA metabolism. The EJC marks the position of the exon-exon junction in the mature mRNA for the gene expression machinery and the core components remain bound to spliced mRNAs throughout all stages of mRNA metabolism thereby influencing downstream processes including nuclear mRNA export, subcellular mRNA localization, translation efficiency and nonsense-mediated mRNA decay (NMD). Binds spliced mRNA in sequence-independent manner, 20-24 nucleotides upstream of mRNA exon-exon junctions. Involved in craniofacial development. This chain is Eukaryotic initiation factor 4A-III (EIF4A3), found in Taeniopygia guttata (Zebra finch).